A 205-amino-acid chain; its full sequence is Large ribosomal subunit protein uL4 (205 aa).

Residues 47–70 form a disordered region; it reads TRAQKSRAEVSGGGKKPFRQKGTG.

This sequence belongs to the universal ribosomal protein uL4 family. Part of the 50S ribosomal subunit.

In terms of biological role, one of the primary rRNA binding proteins, this protein initially binds near the 5'-end of the 23S rRNA. It is important during the early stages of 50S assembly. It makes multiple contacts with different domains of the 23S rRNA in the assembled 50S subunit and ribosome. Forms part of the polypeptide exit tunnel. The chain is Large ribosomal subunit protein uL4 from Acinetobacter baylyi (strain ATCC 33305 / BD413 / ADP1).